Here is a 170-residue protein sequence, read N- to C-terminus: Bifunctional protein PyrR (170 aa).

Positions 90–102 (LVLIDDVLMSGRT) match the PRPP-binding motif.

Belongs to the purine/pyrimidine phosphoribosyltransferase family. PyrR subfamily.

The catalysed reaction is UMP + diphosphate = 5-phospho-alpha-D-ribose 1-diphosphate + uracil. Functionally, regulates the transcription of the pyrimidine nucleotide (pyr) operon in response to exogenous pyrimidines. In terms of biological role, also displays a weak uracil phosphoribosyltransferase activity which is not physiologically significant. The sequence is that of Bifunctional protein PyrR from Pseudomonas syringae pv. syringae (strain B728a).